A 352-amino-acid polypeptide reads, in one-letter code: Histidinol-phosphate aminotransferase (352 aa).

K221 carries the post-translational modification N6-(pyridoxal phosphate)lysine.

This sequence belongs to the class-II pyridoxal-phosphate-dependent aminotransferase family. Histidinol-phosphate aminotransferase subfamily. In terms of assembly, homodimer. Pyridoxal 5'-phosphate is required as a cofactor.

The enzyme catalyses L-histidinol phosphate + 2-oxoglutarate = 3-(imidazol-4-yl)-2-oxopropyl phosphate + L-glutamate. It functions in the pathway amino-acid biosynthesis; L-histidine biosynthesis; L-histidine from 5-phospho-alpha-D-ribose 1-diphosphate: step 7/9. The sequence is that of Histidinol-phosphate aminotransferase from Staphylococcus aureus (strain bovine RF122 / ET3-1).